The primary structure comprises 456 residues: Cysteine--tRNA ligase (456 aa).

Position 29 (Cys29) interacts with Zn(2+). A 'HIGH' region motif is present at residues 31–41; the sequence is PTVYDYAHVGN. Zn(2+) contacts are provided by Cys209, His234, and Glu238. A 'KMSKS' region motif is present at residues 267-271; the sequence is KMSKS. Residue Lys270 coordinates ATP.

Belongs to the class-I aminoacyl-tRNA synthetase family. In terms of assembly, monomer. Zn(2+) serves as cofactor.

Its subcellular location is the cytoplasm. The enzyme catalyses tRNA(Cys) + L-cysteine + ATP = L-cysteinyl-tRNA(Cys) + AMP + diphosphate. In Rhodospirillum centenum (strain ATCC 51521 / SW), this protein is Cysteine--tRNA ligase.